The chain runs to 297 residues: Probable endonuclease 4 (297 aa).

9 residues coordinate Zn(2+): His-69, His-110, Glu-145, Asp-179, His-182, His-214, Asp-227, His-229, and Glu-259.

Belongs to the AP endonuclease 2 family. Requires Zn(2+) as cofactor.

The enzyme catalyses Endonucleolytic cleavage to 5'-phosphooligonucleotide end-products.. Endonuclease IV plays a role in DNA repair. It cleaves phosphodiester bonds at apurinic or apyrimidinic (AP) sites, generating a 3'-hydroxyl group and a 5'-terminal sugar phosphate. This is Probable endonuclease 4 from Listeria innocua serovar 6a (strain ATCC BAA-680 / CLIP 11262).